Consider the following 571-residue polypeptide: Penicillin-binding protein activator LpoA (571 aa).

A signal peptide spans 1 to 26 (MMTILLQHTHLKNRLMPFLLALFLAG). A lipid anchor (N-palmitoyl cysteine) is attached at Cys27. The S-diacylglycerol cysteine moiety is linked to residue Cys27.

It belongs to the LpoA family. Interacts with PBP1a.

The protein localises to the cell outer membrane. Regulator of peptidoglycan synthesis that is essential for the function of penicillin-binding protein 1A (PBP1a). The chain is Penicillin-binding protein activator LpoA from Pasteurella multocida (strain Pm70).